The following is a 655-amino-acid chain: Spastin (655 aa).

Topologically, residues 1–58 (MLFDLINSFLKNGINNSNNNNNNNNNKNNFYNSLEDDDYLLNNQTTKVSLYLYFFIFA) are cytoplasmic. The helical intramembrane region spans 59–79 (FMFLVVDLIMLYYKHRENIES). The Cytoplasmic segment spans residues 80 to 655 (RETDLSLKLN…EKWNQKFGTI (576 aa)). Residues 102-140 (KSSPTTSTTTTTITPTTTSSSQLRQPSTPKTTTKTINSP) are compositionally biased toward low complexity. Positions 102–151 (KSSPTTSTTTTTITPTTTSSSQLRQPSTPKTTTKTINSPPSTPKSPPPLP) are disordered. The segment covering 141–151 (PSTPKSPPPLP) has biased composition (pro residues). In terms of domain architecture, MIT spans 169 to 232 (LNEAKSQIDS…KRAEYLKNEL (64 aa)). Residues 261–325 (EQQQQQQQQS…TITSPGNKYG (65 aa)) are disordered. The span at 262–320 (QQQQQQQQSSSTYRNSLNLSSSKSNSTINNRHSISSLSSLNSTTATTTTPSNTSTITSP) shows a compositional bias: low complexity. ATP is bound at residue 424–431 (GPPGNGKT).

It belongs to the AAA ATPase family. Spastin subfamily. In terms of assembly, homohexamer. The homohexamer is stabilized by ATP-binding. The homohexamer may adopt a ring conformation through which microtubules pass prior to being severed. Interacts with microtubules.

Its subcellular location is the membrane. It localises to the cytoplasm. The protein localises to the cytoskeleton. The protein resides in the microtubule organizing center. It is found in the centrosome. The enzyme catalyses n ATP + n H2O + a microtubule = n ADP + n phosphate + (n+1) alpha/beta tubulin heterodimers.. Functionally, ATP-dependent microtubule severing protein. Microtubule severing may promote reorganization of cellular microtubule arrays and the release of microtubules from the microtubule organizing center following nucleation. In Dictyostelium discoideum (Social amoeba), this protein is Spastin.